We begin with the raw amino-acid sequence, 224 residues long: UPF0319 protein VC_1853 (224 aa).

An N-terminal signal peptide occupies residues 1–21; the sequence is MKLNPLILGLLLSFSAGHSLA.

Belongs to the UPF0319 family.

The sequence is that of UPF0319 protein VC_1853 from Vibrio cholerae serotype O1 (strain ATCC 39315 / El Tor Inaba N16961).